A 716-amino-acid chain; its full sequence is MFDYFRKEIEWAGRPLILETGKVARQADGAVMITYGDTVVLCTAVGAKSVKPGQDFFPLTVNYQEKAYAAGKIPGGFFKREGRPSEAEVLNARLIDRPIRPLFPENFRNEVQITATVLSYDNENDPALVSLIGCSAALTLSGIPFFGPVACARIGRIDGKLVVNPTHDEIKDSTLDLMVAGTAEGVLMVESEASELSEETMLEAVTLGHTSFQPVIDAIIALAEHAAKAPWDLPSLTKEEIALRKRVEKVGNKLMADAYKERQKQARYKKVAEAKDRINEILADEGLDVELAKPMLKELEAQVVRGSILKTGIRIDGRDLKTVRPILAEVGILPRAHGSSLFTRGETQALVVATLGTGQDEQIIDALEGEYRSNFMLHYNFPPYSVGECGRMGSPGRREIGHGKLAWRAIHPLLPSKEAFPYTMRVVSEITESNGSSSMATVCGSSLALMDAGVPLPRPVAGIAMGLIKEDRGYAVLSDILGDEDHLGDMDFKVAGTADGVTALQMDIKITSITPEIMKIALEQAREGRIHILGEMAKALTEGRGEVSGNAPKITTISVPKEKIRDVIGSGGKVIREIVEYSGAKVDIGDDGTVTIAASNDEQAQKAIARIEGIVAEPEIGRIYEGKVVKTADFGAFVNFLGPRDGLVHISELAEGRVAKTSDVVKQGDAVKVKVIGFDDRGKVKLSMRVVDQATGADITESVGAKPGRPPRRDAE.

Residues Asp-485 and Asp-491 each contribute to the Mg(2+) site. The KH domain occupies 552–611 (PKITTISVPKEKIRDVIGSGGKVIREIVEYSGAKVDIGDDGTVTIAASNDEQAQKAIARI). The S1 motif domain maps to 621 to 689 (GRIYEGKVVK…DRGKVKLSMR (69 aa)).

This sequence belongs to the polyribonucleotide nucleotidyltransferase family. Mg(2+) serves as cofactor.

Its subcellular location is the cytoplasm. The catalysed reaction is RNA(n+1) + phosphate = RNA(n) + a ribonucleoside 5'-diphosphate. Its function is as follows. Involved in mRNA degradation. Catalyzes the phosphorolysis of single-stranded polyribonucleotides processively in the 3'- to 5'-direction. This is Polyribonucleotide nucleotidyltransferase from Gluconobacter oxydans (strain 621H) (Gluconobacter suboxydans).